We begin with the raw amino-acid sequence, 293 residues long: Elongation factor Ts (293 aa).

Residues 80 to 83 (TDFV) form an involved in Mg(2+) ion dislocation from EF-Tu region.

This sequence belongs to the EF-Ts family.

The protein localises to the cytoplasm. Associates with the EF-Tu.GDP complex and induces the exchange of GDP to GTP. It remains bound to the aminoacyl-tRNA.EF-Tu.GTP complex up to the GTP hydrolysis stage on the ribosome. The polypeptide is Elongation factor Ts (Burkholderia lata (strain ATCC 17760 / DSM 23089 / LMG 22485 / NCIMB 9086 / R18194 / 383)).